The following is a 344-amino-acid chain: Probable nicotinate-nucleotide adenylyltransferase/Ap4A hydrolase (344 aa).

Residues 1–182 (MIFGGAFDPL…YIHQHNIYLK (182 aa)) form a naMN adenylyltransferase region. The interval 191-344 (EPRMQHCLRV…LKYVRSLQKN (154 aa)) is ap4A hydrolase. The HD domain occupies 193 to 304 (RMQHCLRVGQ…IYLADKLEPM (112 aa)). Histidine 196 serves as a coordination point for ADP. Positions 196, 225, and 226 each coordinate Fe cation. ADP-binding positions include 226 to 229 (DLAK), histidine 255, 281 to 282 (HT), aspartate 299, and arginine 305. A Fe cation-binding site is contributed by aspartate 299.

In the N-terminal section; belongs to the NadD family. The protein in the C-terminal section; belongs to the Ap4A hydrolase YqeK family.

The catalysed reaction is nicotinate beta-D-ribonucleotide + ATP + H(+) = deamido-NAD(+) + diphosphate. It carries out the reaction P(1),P(4)-bis(5'-adenosyl) tetraphosphate + H2O = 2 ADP + 2 H(+). It functions in the pathway cofactor biosynthesis; NAD(+) biosynthesis; deamido-NAD(+) from nicotinate D-ribonucleotide: step 1/1. Its function is as follows. Catalyzes the reversible adenylation of nicotinate mononucleotide (NaMN) to nicotinic acid adenine dinucleotide (NaAD). Functionally, hydrolyzes diadenosine 5',5'''-P1,P4-tetraphosphate (Ap4A) to yield ADP. The chain is Probable nicotinate-nucleotide adenylyltransferase/Ap4A hydrolase from Mycoplasma pneumoniae (strain ATCC 29342 / M129 / Subtype 1) (Mycoplasmoides pneumoniae).